A 467-amino-acid polypeptide reads, in one-letter code: Regulatory protein NPR6 (467 aa).

The 85-residue stretch at 27–111 folds into the BTB domain; the sequence is SDVTFSVEGR…LYSGQVSIVP (85 aa). Residues 117–131 form a C2HC NPR-type zinc finger; sequence RSNCGDRGCWHTHCT. Residues cysteine 120, cysteine 125, histidine 127, and cysteine 130 each contribute to the Zn(2+) site. 4 ANK repeats span residues 247–276, 277–306, 311–340, and 344–378; these read QKIR…LNLD, ESLA…DVNY, TGKT…DPNV, and DGIT…KLRL. The disordered stretch occupies residues 434–467; that stretch reads RDIGDDNSNQREGMNLHHHHHDPSTMYHHHHHHF. Basic residues predominate over residues 449–467; that stretch reads LHHHHHDPSTMYHHHHHHF.

The protein belongs to the plant 'ANKYRIN-BTB/POZ' family. 'NOOT-BOP-COCH-like' (NBCL) subfamily. Homodimer or heterodimer with BOP2. Interacts with PAN.

The protein resides in the cytoplasm. It localises to the nucleus. It functions in the pathway protein modification; protein ubiquitination. In terms of biological role, may act as a substrate-specific adapter of an E3 ubiquitin-protein ligase complex (CUL3-RBX1-BTB) which mediates the ubiquitination and subsequent proteasomal degradation of target proteins. Acts redundantly with BOP2. BOP1/2 promote leaf and floral meristem fate and determinacy in a pathway targeting AP1 and AGL24. BOP1/2 act as transcriptional co-regulators through direct interaction with TGA factors, including PAN, a direct regulator of AP1. Controls lateral organ fate through positive regulation of adaxial-abaxial polarity genes ATHB-14/PHB, YAB1/FIL and YAB3, and through positive regulation of LOB domain-containing genes LOB, LBD6/AS2 and LBD36. Promotes and maintains a developmentally determinate state in leaf cells through the negative regulation of JAG, JGL and class I KNOX genes. Is also involved in nectary development, formation of normal abscission zones (AZs) and suppression of bract formation, probably by regulating the cell wall disorganization. In Arabidopsis thaliana (Mouse-ear cress), this protein is Regulatory protein NPR6.